Here is a 56-residue protein sequence, read N- to C-terminus: Large ribosomal subunit protein bL32 (56 aa).

Residues M1–H37 are disordered.

Belongs to the bacterial ribosomal protein bL32 family.

The sequence is that of Large ribosomal subunit protein bL32 from Photorhabdus laumondii subsp. laumondii (strain DSM 15139 / CIP 105565 / TT01) (Photorhabdus luminescens subsp. laumondii).